The following is a 617-amino-acid chain: uncharacterized protein (617 aa).

A helical transmembrane segment spans residues 103–123 (AGVLLAKFFPLLFLYPLTYLA). In terms of domain architecture, Protein kinase spans 200–609 (FETREPVGSG…DILEAAKPFL (410 aa)). ATP is bound by residues 206–214 (VGSGCVAQV) and Lys302. The active-site Proton acceptor is the Asp436.

This sequence belongs to the protein kinase superfamily. ADCK protein kinase family.

It is found in the mitochondrion. The protein localises to the membrane. The function of this protein is not yet clear. It is not known if it has protein kinase activity and what type of substrate it would phosphorylate (Ser, Thr or Tyr). Involved in the mitochondrial import of CoQ precursors, plays a role in muscle mitochondrial function and fatty acid beta-oxidation. This is an uncharacterized protein from Mus musculus (Mouse).